A 243-amino-acid polypeptide reads, in one-letter code: Ornithine decarboxylase antizyme 3 (243 aa).

Residues Ser6, Ser9, and Ser12 each carry the phosphoserine modification.

The protein belongs to the ODC antizyme family. Interacts with ODC1 and thereby sterically blocks ODC homodimerization. Interacts with AZIN2; this interaction disrupts the interaction between the antizyme and ODC1. Interacts with GGN. Isoform 2 interacts with PPP1R16A; Modulates PPP1CB activity. In terms of tissue distribution, testis-specific. Isoform 2 is expressed in outer dense fibers, fibrous sheath and the connecting piece of sperm.

The protein localises to the nucleus. Its subcellular location is the cytoplasm. It is found in the cell projection. The protein resides in the cilium. It localises to the flagellum. Ornithine decarboxylase (ODC) antizyme protein that negatively regulates ODC activity and intracellular polyamine biosynthesis and uptake in response to increased intracellular polyamine levels. Binds to ODC monomers, inhibiting the assembly of the functional ODC homodimers. Does not target the ODC monomers for degradation, which allows a protein synthesis-independent restoration of ODC activity. Stabilizes AZIN2 by interfering with its ubiquitination. Involved in the translocation of AZNI2 from ER-Golgi intermediate compartment (ERGIC) to the cytosol. Probably plays a key role in spermatogenesis by regulating the intracellular concentration of polyamines in haploid germ cells. Its function is as follows. Does not possess antizyme activity. Modulates PPP1CB activity through its interaction with PPP1R16A. In Rattus norvegicus (Rat), this protein is Ornithine decarboxylase antizyme 3.